The primary structure comprises 212 residues: Thymidylate kinase (212 aa).

10–17 (GLEGAGKT) provides a ligand contact to ATP.

This sequence belongs to the thymidylate kinase family.

The catalysed reaction is dTMP + ATP = dTDP + ADP. Phosphorylation of dTMP to form dTDP in both de novo and salvage pathways of dTTP synthesis. This Serratia proteamaculans (strain 568) protein is Thymidylate kinase.